The chain runs to 413 residues: Arginine biosynthesis bifunctional protein ArgJ 1 (413 aa).

Substrate contacts are provided by T154, K180, T191, E277, N408, and T413. The active-site Nucleophile is the T191.

It belongs to the ArgJ family. As to quaternary structure, heterotetramer of two alpha and two beta chains.

It localises to the cytoplasm. The enzyme catalyses N(2)-acetyl-L-ornithine + L-glutamate = N-acetyl-L-glutamate + L-ornithine. The catalysed reaction is L-glutamate + acetyl-CoA = N-acetyl-L-glutamate + CoA + H(+). It participates in amino-acid biosynthesis; L-arginine biosynthesis; L-ornithine and N-acetyl-L-glutamate from L-glutamate and N(2)-acetyl-L-ornithine (cyclic): step 1/1. Its pathway is amino-acid biosynthesis; L-arginine biosynthesis; N(2)-acetyl-L-ornithine from L-glutamate: step 1/4. Functionally, catalyzes two activities which are involved in the cyclic version of arginine biosynthesis: the synthesis of N-acetylglutamate from glutamate and acetyl-CoA as the acetyl donor, and of ornithine by transacetylation between N(2)-acetylornithine and glutamate. The protein is Arginine biosynthesis bifunctional protein ArgJ 1 of Nostoc sp. (strain PCC 7120 / SAG 25.82 / UTEX 2576).